Here is a 261-residue protein sequence, read N- to C-terminus: G patch domain-containing protein 11 (261 aa).

Disordered stretches follow at residues 1–67 (MEEE…LNEA), 88–124 (ALGK…AEEN), and 184–213 (EAWY…LVEE). 2 stretches are compositionally biased toward basic and acidic residues: residues 29-64 (RVKE…DTKL) and 111-124 (IGHE…AEEN). A coiled-coil region spans residues 31 to 65 (KECYEKEEKHKEANIKNRQQKLKDVEKEKRDTKLN). Positions 70–116 (NENKGFALLQKMGYKKGQALGKKGDGIVEPIPLNIKTGRSGIGHEEM) constitute a G-patch domain. Residues 190 to 222 (KMNEQEADEEADEETEEDEDLVEEELSTLEKLQ) are a coiled coil. The segment covering 194 to 213 (QEADEEADEETEEDEDLVEE) has biased composition (acidic residues).

Belongs to the GPATCH11 family.

It is found in the chromosome. The protein localises to the centromere. It localises to the kinetochore. The chain is G patch domain-containing protein 11 (gpatch11) from Xenopus tropicalis (Western clawed frog).